The sequence spans 574 residues: Proline--tRNA ligase (574 aa).

Belongs to the class-II aminoacyl-tRNA synthetase family. ProS type 1 subfamily. As to quaternary structure, homodimer.

It localises to the cytoplasm. The enzyme catalyses tRNA(Pro) + L-proline + ATP = L-prolyl-tRNA(Pro) + AMP + diphosphate. Functionally, catalyzes the attachment of proline to tRNA(Pro) in a two-step reaction: proline is first activated by ATP to form Pro-AMP and then transferred to the acceptor end of tRNA(Pro). As ProRS can inadvertently accommodate and process non-cognate amino acids such as alanine and cysteine, to avoid such errors it has two additional distinct editing activities against alanine. One activity is designated as 'pretransfer' editing and involves the tRNA(Pro)-independent hydrolysis of activated Ala-AMP. The other activity is designated 'posttransfer' editing and involves deacylation of mischarged Ala-tRNA(Pro). The misacylated Cys-tRNA(Pro) is not edited by ProRS. This chain is Proline--tRNA ligase, found in Nitrosococcus oceani (strain ATCC 19707 / BCRC 17464 / JCM 30415 / NCIMB 11848 / C-107).